We begin with the raw amino-acid sequence, 375 residues long: DNA replication and repair protein RecF (375 aa).

Position 30–37 (30–37 (GDNAQGKS)) interacts with ATP.

The protein belongs to the RecF family.

Its subcellular location is the cytoplasm. The RecF protein is involved in DNA metabolism; it is required for DNA replication and normal SOS inducibility. RecF binds preferentially to single-stranded, linear DNA. It also seems to bind ATP. In Gloeobacter violaceus (strain ATCC 29082 / PCC 7421), this protein is DNA replication and repair protein RecF.